A 185-amino-acid polypeptide reads, in one-letter code: uncharacterized protein (185 aa).

The region spanning 17–137 (GKSSIMNALF…QKPIIVVINK (121 aa)) is the G domain.

This is an uncharacterized protein from Methanocaldococcus jannaschii (strain ATCC 43067 / DSM 2661 / JAL-1 / JCM 10045 / NBRC 100440) (Methanococcus jannaschii).